A 342-amino-acid chain; its full sequence is Methionyl-tRNA formyltransferase (342 aa).

108 to 111 (SLLP) contributes to the (6S)-5,6,7,8-tetrahydrofolate binding site.

This sequence belongs to the Fmt family.

The catalysed reaction is L-methionyl-tRNA(fMet) + (6R)-10-formyltetrahydrofolate = N-formyl-L-methionyl-tRNA(fMet) + (6S)-5,6,7,8-tetrahydrofolate + H(+). Functionally, attaches a formyl group to the free amino group of methionyl-tRNA(fMet). The formyl group appears to play a dual role in the initiator identity of N-formylmethionyl-tRNA by promoting its recognition by IF2 and preventing the misappropriation of this tRNA by the elongation apparatus. The polypeptide is Methionyl-tRNA formyltransferase (Prochlorococcus marinus (strain MIT 9303)).